A 224-amino-acid polypeptide reads, in one-letter code: Urease accessory protein UreF (224 aa).

The protein belongs to the UreF family. As to quaternary structure, ureD, UreF and UreG form a complex that acts as a GTP-hydrolysis-dependent molecular chaperone, activating the urease apoprotein by helping to assemble the nickel containing metallocenter of UreC. The UreE protein probably delivers the nickel.

The protein resides in the cytoplasm. Its function is as follows. Required for maturation of urease via the functional incorporation of the urease nickel metallocenter. The chain is Urease accessory protein UreF from Klebsiella pneumoniae (strain 342).